Consider the following 393-residue polypeptide: Lipid-A-disaccharide synthase (393 aa).

Belongs to the LpxB family.

The enzyme catalyses a lipid X + a UDP-2-N,3-O-bis[(3R)-3-hydroxyacyl]-alpha-D-glucosamine = a lipid A disaccharide + UDP + H(+). It participates in bacterial outer membrane biogenesis; LPS lipid A biosynthesis. Condensation of UDP-2,3-diacylglucosamine and 2,3-diacylglucosamine-1-phosphate to form lipid A disaccharide, a precursor of lipid A, a phosphorylated glycolipid that anchors the lipopolysaccharide to the outer membrane of the cell. This chain is Lipid-A-disaccharide synthase, found in Bordetella bronchiseptica (strain ATCC BAA-588 / NCTC 13252 / RB50) (Alcaligenes bronchisepticus).